A 68-amino-acid polypeptide reads, in one-letter code: Large ribosomal subunit protein uL29 (68 aa).

This sequence belongs to the universal ribosomal protein uL29 family.

In Parvibaculum lavamentivorans (strain DS-1 / DSM 13023 / NCIMB 13966), this protein is Large ribosomal subunit protein uL29.